Reading from the N-terminus, the 157-residue chain is 3-dehydroquinate dehydratase (157 aa).

The Proton acceptor role is filled by tyrosine 24. Asparagine 75, histidine 81, and aspartate 88 together coordinate substrate. Histidine 101 (proton donor) is an active-site residue. Substrate-binding positions include 102–103 (LS) and arginine 112.

It belongs to the type-II 3-dehydroquinase family. As to quaternary structure, homododecamer.

It carries out the reaction 3-dehydroquinate = 3-dehydroshikimate + H2O. It participates in metabolic intermediate biosynthesis; chorismate biosynthesis; chorismate from D-erythrose 4-phosphate and phosphoenolpyruvate: step 3/7. Catalyzes a trans-dehydration via an enolate intermediate. The polypeptide is 3-dehydroquinate dehydratase (Brucella melitensis biotype 1 (strain ATCC 23456 / CCUG 17765 / NCTC 10094 / 16M)).